Here is a 277-residue protein sequence, read N- to C-terminus: Large ribosomal subunit protein uL2 (277 aa).

Residues 223–277 form a disordered region; that stretch reads VTMNPVDHPHGGGEGRTSGGRHPVTPWGKPTKGMKTRSNKATDKFIVTSRHKRKK.

This sequence belongs to the universal ribosomal protein uL2 family. As to quaternary structure, part of the 50S ribosomal subunit. Forms a bridge to the 30S subunit in the 70S ribosome.

One of the primary rRNA binding proteins. Required for association of the 30S and 50S subunits to form the 70S ribosome, for tRNA binding and peptide bond formation. It has been suggested to have peptidyltransferase activity; this is somewhat controversial. Makes several contacts with the 16S rRNA in the 70S ribosome. The polypeptide is Large ribosomal subunit protein uL2 (Azorhizobium caulinodans (strain ATCC 43989 / DSM 5975 / JCM 20966 / LMG 6465 / NBRC 14845 / NCIMB 13405 / ORS 571)).